A 243-amino-acid chain; its full sequence is 2,3-bisphosphoglycerate-dependent phosphoglycerate mutase (243 aa).

Substrate contacts are provided by residues 8 to 15, 21 to 22, arginine 60, 87 to 90, lysine 98, 114 to 115, and 183 to 184; these read RHGQSEWN, TG, ERHY, RR, and GN. The active-site Tele-phosphohistidine intermediate is the histidine 9. Catalysis depends on glutamate 87, which acts as the Proton donor/acceptor.

This sequence belongs to the phosphoglycerate mutase family. BPG-dependent PGAM subfamily. In terms of assembly, homodimer.

The catalysed reaction is (2R)-2-phosphoglycerate = (2R)-3-phosphoglycerate. It functions in the pathway carbohydrate degradation; glycolysis; pyruvate from D-glyceraldehyde 3-phosphate: step 3/5. In terms of biological role, catalyzes the interconversion of 2-phosphoglycerate and 3-phosphoglycerate. This is 2,3-bisphosphoglycerate-dependent phosphoglycerate mutase from Maricaulis maris (strain MCS10) (Caulobacter maris).